Here is an 80-residue protein sequence, read N- to C-terminus: 17 kDa surface antigen (80 aa).

Positions 47 to 58 (ALETTPSGTSIE) are enriched in polar residues. Positions 47–80 (ALETTPSGTSIEWRNPDNGNYGYVTPSKTYKNST) are disordered.

This sequence belongs to the rickettsiale 17 kDa surface antigen family.

The protein resides in the cell outer membrane. In Rickettsia canadensis, this protein is 17 kDa surface antigen (omp).